The sequence spans 444 residues: Chromosome partition protein MukF (444 aa).

Residues 211–239 form a leucine-zipper region; that stretch reads LDETSGNLRELQDTLNAAGDKLQAQLLRI.

Belongs to the MukF family. In terms of assembly, interacts, and probably forms a ternary complex, with MukE and MukB via its C-terminal region. The complex formation is stimulated by calcium or magnesium. It is required for an interaction between MukE and MukB.

It localises to the cytoplasm. It is found in the nucleoid. Involved in chromosome condensation, segregation and cell cycle progression. May participate in facilitating chromosome segregation by condensation DNA from both sides of a centrally located replisome during cell division. Not required for mini-F plasmid partitioning. Probably acts via its interaction with MukB and MukE. Overexpression results in anucleate cells. It has a calcium binding activity. The chain is Chromosome partition protein MukF from Actinobacillus succinogenes (strain ATCC 55618 / DSM 22257 / CCUG 43843 / 130Z).